Reading from the N-terminus, the 535-residue chain is T-complex protein 1 subunit beta (535 aa).

Position 2 is an N-acetylalanine (Ala-2). Ser-3 carries the post-translational modification Phosphoserine. N6-acetyllysine is present on Lys-13. Gly-44 serves as a coordination point for ADP. Residue Gly-44 coordinates ATP. Ser-60 carries the post-translational modification Phosphoserine. Asp-97 is a Mg(2+) binding site. 4 residues coordinate ADP: Gly-98, Thr-99, Thr-100, and Ser-101. ATP is bound by residues Gly-98, Thr-99, and Thr-100. Residue Lys-154 is modified to N6-acetyllysine. ADP contacts are provided by Ser-168 and Ser-169. Lys-181 is modified (N6-acetyllysine). A Glycyl lysine isopeptide (Lys-Gly) (interchain with G-Cter in SUMO2) cross-link involves residue Lys-248. Phosphoserine is present on Ser-260. Thr-261 is subject to Phosphothreonine. Residues Gly-410, Glu-495, and Lys-500 each coordinate ADP. Residues Glu-495 and Lys-500 each contribute to the ATP site.

It belongs to the TCP-1 chaperonin family. As to quaternary structure, component of the chaperonin-containing T-complex (TRiC), a hexadecamer composed of two identical back-to-back stacked rings enclosing a protein folding chamber. Each ring is made up of eight different subunits: TCP1/CCT1, CCT2, CCT3, CCT4, CCT5, CCT6A/CCT6, CCT7, CCT8. Interacts with PACRG. Interacts with FLCN. Interacts with DLEC1. Interacts with SVEP1.

The protein resides in the cytoplasm. The enzyme catalyses ATP + H2O = ADP + phosphate + H(+). Functionally, component of the chaperonin-containing T-complex (TRiC), a molecular chaperone complex that assists the folding of actin, tubulin and other proteins upon ATP hydrolysis. The TRiC complex mediates the folding of WRAP53/TCAB1, thereby regulating telomere maintenance. As part of the TRiC complex may play a role in the assembly of BBSome, a complex involved in ciliogenesis regulating transports vesicles to the cilia. The protein is T-complex protein 1 subunit beta (CCT2) of Bos taurus (Bovine).